Consider the following 420-residue polypeptide: Putative competence-damage inducible protein (420 aa).

This sequence belongs to the CinA family.

This Halalkalibacterium halodurans (strain ATCC BAA-125 / DSM 18197 / FERM 7344 / JCM 9153 / C-125) (Bacillus halodurans) protein is Putative competence-damage inducible protein.